The sequence spans 396 residues: Elongation factor Tu (396 aa).

The region spanning 10–206 (KPHVNVGTIG…ALDSYIPEPE (197 aa)) is the tr-type G domain. Residues 19–26 (GHVDHGKT) form a G1 region. 19 to 26 (GHVDHGKT) is a binding site for GTP. A Mg(2+)-binding site is contributed by T26. Residues 60–64 (GITIN) are G2. The segment at 81-84 (DCPG) is G3. GTP is bound by residues 81 to 85 (DCPGH) and 136 to 139 (NKAD). The segment at 136-139 (NKAD) is G4. The segment at 174–176 (SAL) is G5.

The protein belongs to the TRAFAC class translation factor GTPase superfamily. Classic translation factor GTPase family. EF-Tu/EF-1A subfamily. Monomer.

The protein resides in the cytoplasm. It catalyses the reaction GTP + H2O = GDP + phosphate + H(+). GTP hydrolase that promotes the GTP-dependent binding of aminoacyl-tRNA to the A-site of ribosomes during protein biosynthesis. The sequence is that of Elongation factor Tu from Nitrosomonas europaea (strain ATCC 19718 / CIP 103999 / KCTC 2705 / NBRC 14298).